Reading from the N-terminus, the 270-residue chain is Glutamate racemase (270 aa).

Substrate-binding positions include 10–11 and 42–43; these read DS and YG. The active-site Proton donor/acceptor is Cys-73. Residue 74-75 participates in substrate binding; that stretch reads NT. Residue Cys-184 is the Proton donor/acceptor of the active site. 185–186 lines the substrate pocket; the sequence is TH.

This sequence belongs to the aspartate/glutamate racemases family.

It carries out the reaction L-glutamate = D-glutamate. The protein operates within cell wall biogenesis; peptidoglycan biosynthesis. In terms of biological role, provides the (R)-glutamate required for cell wall biosynthesis. The sequence is that of Glutamate racemase from Geobacter metallireducens (strain ATCC 53774 / DSM 7210 / GS-15).